A 391-amino-acid polypeptide reads, in one-letter code: Casein kinase II subunit alpha (391 aa).

The segment at 36-41 (QDDYQL) is interaction with beta subunit. One can recognise a Protein kinase domain in the interval 39-324 (YQLVRKLGRG…AREAMEHPYF (286 aa)). Residues 45 to 53 (LGRGKYSEV) and Lys68 contribute to the ATP site. Catalysis depends on Asp156, which acts as the Proton acceptor. Thr344 and Thr360 each carry phosphothreonine; by CDK1. 2 positions are modified to phosphoserine; by CDK1: Ser362 and Ser370.

The protein belongs to the protein kinase superfamily. Ser/Thr protein kinase family. CK2 subfamily. As to quaternary structure, heterotetramer composed of two catalytic subunits (alpha chain and/or alpha' chain) and two regulatory subunits (beta chains). The tetramer can exist as a combination of 2 alpha/2 beta, 2 alpha'/2 beta or 1 alpha/1 alpha'/2 beta subunits. Also part of a CK2-SPT16-SSRP1 complex composed of SSRP1, SUPT16H, CSNK2A1, CSNK2A2 and CSNK2B, which forms following UV irradiation. Interacts with RNPS1. Interacts with SNAI1. Interacts with PML. Interacts with CCAR2. Interacts with HIRIP3. Post-translationally, phosphorylated at Thr-344, Thr-360, Ser-362 and Ser-370 by CDK1 in prophase and metaphase and dephosphorylated during anaphase. Phosphorylation does not directly affect casein kinase 2 activity, but may contribute to its regulation by forming binding sites for interacting proteins and/or targeting it to different compartments.

It is found in the nucleus. The enzyme catalyses L-seryl-[protein] + ATP = O-phospho-L-seryl-[protein] + ADP + H(+). It catalyses the reaction L-threonyl-[protein] + ATP = O-phospho-L-threonyl-[protein] + ADP + H(+). Its activity is regulated as follows. Constitutively active protein kinase whose activity is not directly affected by phosphorylation. Seems to be regulated by level of expression and localization. Its function is as follows. Catalytic subunit of a constitutively active serine/threonine-protein kinase complex that phosphorylates a large number of substrates containing acidic residues C-terminal to the phosphorylated serine or threonine. Regulates numerous cellular processes, such as cell cycle progression, apoptosis and transcription, as well as viral infection. May act as a regulatory node which integrates and coordinates numerous signals leading to an appropriate cellular response. During mitosis, functions as a component of the p53/TP53-dependent spindle assembly checkpoint (SAC) that maintains cyclin-B-CDK1 activity and G2 arrest in response to spindle damage. Also required for p53/TP53-mediated apoptosis, phosphorylating 'Ser-392' of p53/TP53 following UV irradiation. Phosphorylates a number of DNA repair proteins in response to DNA damage, such as MDC1, MRE11, RAD9A, RAD51 and HTATSF1, promoting their recruitment to DNA damage sites. Can also negatively regulate apoptosis. Phosphorylates the caspases CASP9 and CASP2 and the apoptotic regulator NOL3. Phosphorylation protects CASP9 from cleavage and activation by CASP8, and inhibits the dimerization of CASP2 and activation of CASP8. Phosphorylates YY1, protecting YY1 from cleavage by CASP7 during apoptosis. Regulates transcription by direct phosphorylation of RNA polymerases I, II, III and IV. Also phosphorylates and regulates numerous transcription factors including NF-kappa-B, STAT1, CREB1, IRF1, IRF2, ATF1, ATF4, SRF, MAX, JUN, FOS, MYC and MYB. Phosphorylates Hsp90 and its co-chaperones FKBP4 and CDC37, which is essential for chaperone function. Mediates sequential phosphorylation of FNIP1, promoting its gradual interaction with Hsp90, leading to activate both kinase and non-kinase client proteins of Hsp90. Regulates Wnt signaling by phosphorylating CTNNB1 and the transcription factor LEF1. Acts as an ectokinase that phosphorylates several extracellular proteins. Phosphorylates PML at 'Ser-565' and primes it for ubiquitin-mediated degradation. Plays an important role in the circadian clock function by phosphorylating BMAL1 at 'Ser-90' which is pivotal for its interaction with CLOCK and which controls CLOCK nuclear entry. Phosphorylates FMR1, promoting FMR1-dependent formation of a membraneless compartment. May phosphorylate histone H2A on 'Ser-1'. The protein is Casein kinase II subunit alpha (Csnk2a1) of Mus musculus (Mouse).